A 766-amino-acid chain; its full sequence is MALAHTLGFPRIGRDRELKKAQEAFWKGELDEAGLRAVGRQLRAAHWQVQKDAGIQLLPVGDFAWYDQVLTHSLTFGVIPERFRAHGEAGPTLHTLFGMARGVSDDSCCGGAHAQEMTKWFDTNYHYLVPEFSADQQFQLSWEQLFEEVDEARALGHQVKPVLIGPLTYLWLGKAKGAEFDRLDLLDRLLPLYGQIFRRLAGQGVEWVQIDEPILVLDLPQAWKNAFERAYNLLQSEPLKKLVATYFGGLEDNLGLAANLPVDGLHIDLVRAPEQYPSILDRLPAYKVVSLGLVNGRNVWRCDLEKALEVVRHARERLGERLWVAPSCSLLHSPVDLEREDGLDAELKSWLAFAVQKCREVAVLARAATEPEAAEVLAALEESRAVQASRASSPRIHKPAVQARLAAIKASDAQRRSPFAERIARQRAGLDLPAFPTTTIGSFPQTSSIRLARQSFKQGKLSEAEYIEAMHSEIRHAVQIQEQLGLDVLVHGEAERNDMVEYFAEQLDGYVFTRFGWVQSYGSRCVKPAVIYGDLSRPRAMTVEWIRYAQSLTDKVMKGMLTGPVTMLMWSFPREDVSREVQARQLALAIRDEVVDLEAAGIRIVQIDEAAFREGLPLRRNAWPHYLEWATEAFRLCASGVRDETQIHTHMCYSEFNDVIESIAAMDADVITIETSRSDMELLEAFEQFDYPNEIGPGVYDIHSPRVPSREEIVALLRKAARRIPAERLWVNPDCGLKTRAWPETEAALVNMVAAARELRGDLARG.

Residues 16–19 (RELK) and K119 each bind 5-methyltetrahydropteroyltri-L-glutamate. Residues 440–442 (IGS) and E493 contribute to the L-homocysteine site. L-methionine-binding positions include 440-442 (IGS) and E493. 5-methyltetrahydropteroyltri-L-glutamate contacts are provided by residues 524–525 (RC) and W570. D608 serves as a coordination point for L-homocysteine. D608 provides a ligand contact to L-methionine. A 5-methyltetrahydropteroyltri-L-glutamate-binding site is contributed by E614. Zn(2+) is bound by residues H650, C652, and E674. The Proton donor role is filled by H703. A Zn(2+)-binding site is contributed by C735.

It belongs to the vitamin-B12 independent methionine synthase family. Requires Zn(2+) as cofactor.

The enzyme catalyses 5-methyltetrahydropteroyltri-L-glutamate + L-homocysteine = tetrahydropteroyltri-L-glutamate + L-methionine. The protein operates within amino-acid biosynthesis; L-methionine biosynthesis via de novo pathway; L-methionine from L-homocysteine (MetE route): step 1/1. Its function is as follows. Catalyzes the transfer of a methyl group from 5-methyltetrahydrofolate to homocysteine resulting in methionine formation. The protein is 5-methyltetrahydropteroyltriglutamate--homocysteine methyltransferase of Pseudomonas aeruginosa (strain ATCC 15692 / DSM 22644 / CIP 104116 / JCM 14847 / LMG 12228 / 1C / PRS 101 / PAO1).